Consider the following 526-residue polypeptide: Cholesterol side-chain cleavage enzyme, mitochondrial (526 aa).

The N-terminal 36 residues, 1 to 36, are a transit peptide targeting the mitochondrion; sequence MLAKGLCLRSVLVKSCQPFLSPVWQGPGLATGNGAG. A heme-binding site is contributed by Cys-459.

It belongs to the cytochrome P450 family. Interacts with FDX1/adrenodoxin. The cofactor is heme. Expressed in the kidney where it localizes to the distal convoluted tubule and the thick ascending limb of the loop of Henle (at protein level). In the ovary, highly expressed in interstitial cells (at protein level). Also expressed in adrenal gland and testis.

It is found in the mitochondrion inner membrane. The catalysed reaction is 6 reduced [adrenodoxin] + cholesterol + 3 O2 + 6 H(+) = 4-methylpentanal + pregnenolone + 6 oxidized [adrenodoxin] + 4 H2O. It carries out the reaction 2 reduced [adrenodoxin] + cholesterol + O2 + 2 H(+) = (22R)-hydroxycholesterol + 2 oxidized [adrenodoxin] + H2O. It catalyses the reaction (22R)-hydroxycholesterol + 2 reduced [adrenodoxin] + O2 + 2 H(+) = (20R,22R)-20,22-dihydroxycholesterol + 2 oxidized [adrenodoxin] + H2O. The enzyme catalyses (20R,22R)-20,22-dihydroxycholesterol + 2 reduced [adrenodoxin] + O2 + 2 H(+) = 4-methylpentanal + pregnenolone + 2 oxidized [adrenodoxin] + 2 H2O. Its pathway is lipid metabolism; C21-steroid hormone metabolism. It functions in the pathway steroid metabolism; cholesterol metabolism. Its function is as follows. A cytochrome P450 monooxygenase that catalyzes the side-chain hydroxylation and cleavage of cholesterol to pregnenolone, the precursor of most steroid hormones. Catalyzes three sequential oxidation reactions of cholesterol, namely the hydroxylation at C22 followed with the hydroxylation at C20 to yield 20R,22R-hydroxycholesterol that is further cleaved between C20 and C22 to yield the C21-steroid pregnenolone and 4-methylpentanal. Mechanistically, uses molecular oxygen inserting one oxygen atom into a substrate and reducing the second into a water molecule. Two electrons are provided by NADPH via a two-protein mitochondrial transfer system comprising flavoprotein FDXR (adrenodoxin/ferredoxin reductase) and nonheme iron-sulfur protein FDX1 or FDX2 (adrenodoxin/ferredoxin). This Rattus norvegicus (Rat) protein is Cholesterol side-chain cleavage enzyme, mitochondrial.